Reading from the N-terminus, the 404-residue chain is NADH-quinone oxidoreductase subunit D 1 (404 aa).

The protein belongs to the complex I 49 kDa subunit family. In terms of assembly, NDH-1 is composed of 14 different subunits. Subunits NuoB, C, D, E, F, and G constitute the peripheral sector of the complex.

It is found in the cell membrane. The enzyme catalyses a quinone + NADH + 5 H(+)(in) = a quinol + NAD(+) + 4 H(+)(out). NDH-1 shuttles electrons from NADH, via FMN and iron-sulfur (Fe-S) centers, to quinones in the respiratory chain. The immediate electron acceptor for the enzyme in this species is believed to be a menaquinone. Couples the redox reaction to proton translocation (for every two electrons transferred, four hydrogen ions are translocated across the cytoplasmic membrane), and thus conserves the redox energy in a proton gradient. This is NADH-quinone oxidoreductase subunit D 1 from Symbiobacterium thermophilum (strain DSM 24528 / JCM 14929 / IAM 14863 / T).